The primary structure comprises 249 residues: Myelin protein P0 (249 aa).

Residues 1–29 (MALGAIGDGRLLLLLVGLLSASGPSPTLA) form the signal peptide. In terms of domain architecture, Ig-like V-type spans 30 to 143 (IHVYTPREVY…DIVGKSSQVT (114 aa)). The Extracellular portion of the chain corresponds to 30-153 (IHVYTPREVY…LYVLEKVPTR (124 aa)). Residues C50 and C127 are joined by a disulfide bond. N122 is a glycosylation site (N-linked (GlcNAc...) asparagine). The chain crosses the membrane as a helical span at residues 154 to 179 (YGVVLGSIIGGVLLLVALLVAVVYLV). The Cytoplasmic segment spans residues 180–249 (RFCWLRRQAV…APGEARKDKK (70 aa)). Residues 227–249 (RSAKAAAEKKSKGAPGEARKDKK) form a disordered region.

This sequence belongs to the myelin P0 protein family. In terms of tissue distribution, found only in peripheral nervous system Schwann cells.

Its subcellular location is the cell membrane. In terms of biological role, is an adhesion molecule necessary for normal myelination in the peripheral nervous system. It mediates adhesion between adjacent myelin wraps and ultimately drives myelin compaction. The protein is Myelin protein P0 (MPZ) of Gallus gallus (Chicken).